The sequence spans 459 residues: Glycosyl hydrolase family 109 protein (459 aa).

A signal peptide (tat-type signal) is located at residues 1–31; the sequence is MHNIHRRHFLKAAGAVTAGLITANITASTHA. NAD(+) contacts are provided by residues 64–65, Asp-86, 135–138, 155–156, and Asn-184; these read ER, WEWH, and EV. Residues Tyr-213, Arg-232, 244–247, and Tyr-326 contribute to the substrate site; that span reads YPTH. An NAD(+)-binding site is contributed by Tyr-244.

Belongs to the Gfo/Idh/MocA family. Glycosyl hydrolase 109 subfamily. It depends on NAD(+) as a cofactor. Post-translationally, predicted to be exported by the Tat system. The position of the signal peptide cleavage has not been experimentally proven.

Functionally, glycosidase. The polypeptide is Glycosyl hydrolase family 109 protein (Shewanella sp. (strain W3-18-1)).